Reading from the N-terminus, the 430-residue chain is RNA-binding protein 34 (430 aa).

Disordered stretches follow at residues 1-55, 72-123, and 134-153; these read MALE…GTGR, VPVP…ADRE, and EIHQKQGQKRKNSQPGVKVA. Phosphoserine is present on residues Ser14, Ser28, and Ser99. A compositionally biased stretch (basic and acidic residues) spans 23–34; sequence DGVRGSPPEDYR. A compositionally biased stretch (basic and acidic residues) spans 113 to 123; the sequence is TNAEKKLADRE. At Lys151 the chain carries N6-acetyllysine. RRM domains follow at residues 185 to 280 and 287 to 364; these read RTVF…LASE and RSVF…RSVN. Residue Lys242 forms a Glycyl lysine isopeptide (Lys-Gly) (interchain with G-Cter in SUMO2) linkage. Ser288 is modified (phosphoserine). Disordered regions lie at residues 365–395 and 411–430; these read KEKFKQQNSNPRLKNVSKPKQGLNFTSKTAE and KTKKKGQKKSGRPKKQRKQK.

This sequence belongs to the RRM RBM34 family.

It is found in the nucleus. It localises to the nucleolus. The sequence is that of RNA-binding protein 34 (RBM34) from Homo sapiens (Human).